A 382-amino-acid chain; its full sequence is MQNFLPFSRPAIGSDEINAVVNVLGSGWITTGPQNQQLETDFCAAFGCKHAVAVCSATAGMHITLMALGIGPGDEVITPSQTWVSTINMIVLLGAEPVMVDIDRDTLMVNAADIEAAITSKTKAIIPVHYAGAPCDLDALRQIAQQYKIPLIEDAAHAVGTRYGDQWVGEKGTTIFSFHAIKNITCAEGGLIATDDDELAAKVRRLKFHGLGVDAFDRQIQGRSPQAEVVEPGYKYNLSDIHAAIAVVQLQRLPEINARRQALAARYHQALVDSPLQPLFVPDYAHQHAWHLFMVRVDKERCGIDRDSLMARLKEVGIGSGLHFRAAHTQKYYRERYPSLHLPNTEWNSARLCTLPLFPDMLDSDVDRVVDALATIIGPHRV.

Lys182 carries the N6-(pyridoxal phosphate)lysine modification.

It belongs to the DegT/DnrJ/EryC1 family. ArnB subfamily. As to quaternary structure, homodimer. The cofactor is pyridoxal 5'-phosphate.

It carries out the reaction UDP-4-amino-4-deoxy-beta-L-arabinose + 2-oxoglutarate = UDP-beta-L-threo-pentopyranos-4-ulose + L-glutamate. Its pathway is nucleotide-sugar biosynthesis; UDP-4-deoxy-4-formamido-beta-L-arabinose biosynthesis; UDP-4-deoxy-4-formamido-beta-L-arabinose from UDP-alpha-D-glucuronate: step 2/3. It functions in the pathway bacterial outer membrane biogenesis; lipopolysaccharide biosynthesis. Its function is as follows. Catalyzes the conversion of UDP-4-keto-arabinose (UDP-Ara4O) to UDP-4-amino-4-deoxy-L-arabinose (UDP-L-Ara4N). The modified arabinose is attached to lipid A and is required for resistance to polymyxin and cationic antimicrobial peptides. In Yersinia enterocolitica serotype O:8 / biotype 1B (strain NCTC 13174 / 8081), this protein is UDP-4-amino-4-deoxy-L-arabinose--oxoglutarate aminotransferase.